The sequence spans 202 residues: Small ribosomal subunit protein uS4 (202 aa).

Residues S94–A157 form the S4 RNA-binding domain.

It belongs to the universal ribosomal protein uS4 family. As to quaternary structure, part of the 30S ribosomal subunit. Contacts protein S5. The interaction surface between S4 and S5 is involved in control of translational fidelity.

Its function is as follows. One of the primary rRNA binding proteins, it binds directly to 16S rRNA where it nucleates assembly of the body of the 30S subunit. In terms of biological role, with S5 and S12 plays an important role in translational accuracy. In Malacoplasma penetrans (strain HF-2) (Mycoplasma penetrans), this protein is Small ribosomal subunit protein uS4.